The sequence spans 192 residues: Fe/S biogenesis protein NfuA (192 aa).

[4Fe-4S] cluster contacts are provided by Cys149 and Cys152.

The protein belongs to the NfuA family. In terms of assembly, homodimer. The cofactor is [4Fe-4S] cluster.

Involved in iron-sulfur cluster biogenesis. Binds a 4Fe-4S cluster, can transfer this cluster to apoproteins, and thereby intervenes in the maturation of Fe/S proteins. Could also act as a scaffold/chaperone for damaged Fe/S proteins. This Shewanella loihica (strain ATCC BAA-1088 / PV-4) protein is Fe/S biogenesis protein NfuA.